Here is a 404-residue protein sequence, read N- to C-terminus: Histidine--tRNA ligase (404 aa).

Belongs to the class-II aminoacyl-tRNA synthetase family.

Its subcellular location is the cytoplasm. The catalysed reaction is tRNA(His) + L-histidine + ATP = L-histidyl-tRNA(His) + AMP + diphosphate + H(+). The protein is Histidine--tRNA ligase of Nanoarchaeum equitans (strain Kin4-M).